A 386-amino-acid chain; its full sequence is GLABROUS1 enhancer-binding protein-like 1 (386 aa).

Disordered regions lie at residues 1–58 (MVTP…KKKK) and 197–314 (ESGE…DDDD). A compositionally biased stretch (basic and acidic residues) spans 216 to 226 (EEIRDNDETAR). Residues 221 to 285 (NDETARKAQQ…LKEHEEVANT (65 aa)) adopt a coiled-coil conformation. Over residues 257–267 (DNNGTTQIAQQ) the composition is skewed to polar residues. Over residues 291–300 (NGAAKTTENG) the composition is skewed to low complexity. The non-canonical leucine-zipper stretch occupies residues 354–375 (LSDEWKALCVEERRLNIKKLRF).

This sequence belongs to the GeBP family. In terms of assembly, homo- and heterodimers. Interacts with GEBP, GPL2 and GPL3. Interacts with GEBP. In terms of tissue distribution, expressed in the apical meristem and young leaf primordia. Detected in the vascular tissues of cotyledons and leaves, in hydathodes and at the base of flowers and siliques, but not in roots.

The protein resides in the nucleus. Functionally, probable transcription factor. May play redundant roles with GEBP and GPL2 in cytokinin responses by regulating the transcript levels of type-A ARR response genes. Involved in stress responses. Plays a repressive role in cell expansion by counteracting the positive role of CPR5 in this process, but does not regulate cell proliferation or endoreduplication. The protein is GLABROUS1 enhancer-binding protein-like 1 of Arabidopsis thaliana (Mouse-ear cress).